Consider the following 117-residue polypeptide: Large ribosomal subunit protein bL20 (117 aa).

This sequence belongs to the bacterial ribosomal protein bL20 family.

In terms of biological role, binds directly to 23S ribosomal RNA and is necessary for the in vitro assembly process of the 50S ribosomal subunit. It is not involved in the protein synthesizing functions of that subunit. The sequence is that of Large ribosomal subunit protein bL20 from Brachyspira hyodysenteriae (strain ATCC 49526 / WA1).